Consider the following 507-residue polypeptide: Dihydrolipoyl dehydrogenase 2, mitochondrial (507 aa).

The transit peptide at 1–36 directs the protein to the mitochondrion; that stretch reads MAMASLARRKAYFLTRNISNSPTDAFRFSFSLTRGF. FAD-binding positions include 73-82, Lys91, Gly155, and 184-186; these read EKRGALGGTC and TGS. A disulfide bridge links Cys82 with Cys87. NAD(+)-binding positions include 221-228, Glu244, Val278, and Gly313; that span reads GAGYIGLE. FAD-binding positions include Asp354 and 360-363; that span reads MLAH. His486 functions as the Proton acceptor in the catalytic mechanism.

This sequence belongs to the class-I pyridine nucleotide-disulfide oxidoreductase family. Homodimer. Part of both the glycine cleavage system composed of four proteins: P, T, L and H and of the pyruvate dehydrogenase complex containing multiple copies of three enzymatic components: pyruvate dehydrogenase (E1), dihydrolipoamide acetyltransferase (E2) and lipoamide dehydrogenase (E3). It depends on FAD as a cofactor. S-nytrosylated at unknown positions. Preferentially expressed in roots, flowers and siliques and at a lower level in stems and leaves.

It localises to the mitochondrion matrix. It carries out the reaction N(6)-[(R)-dihydrolipoyl]-L-lysyl-[protein] + NAD(+) = N(6)-[(R)-lipoyl]-L-lysyl-[protein] + NADH + H(+). In terms of biological role, lipoamide dehydrogenase is a component of the glycine decarboxylase (GDC) or glycine cleavage system as well as of the alpha-ketoacid dehydrogenase complexes. LPD1 is probably the protein most often associated with the glycine decarboxylase complex while LPD2 is probably incorporated into alpha-ketoacid dehydrogenase complexes. This chain is Dihydrolipoyl dehydrogenase 2, mitochondrial (LPD2), found in Arabidopsis thaliana (Mouse-ear cress).